Consider the following 495-residue polypeptide: UDP-glycosyltransferase 71B7 (495 aa).

Residues S284, 351-353 (APQ), 368-376 (HCGWNSTLE), and 390-393 (YAEQ) each bind UDP-alpha-D-glucose.

The protein belongs to the UDP-glycosyltransferase family.

The sequence is that of UDP-glycosyltransferase 71B7 (UGT71B7) from Arabidopsis thaliana (Mouse-ear cress).